Consider the following 372-residue polypeptide: Adaptive-response sensory-kinase SasA (372 aa).

In terms of domain architecture, Histidine kinase spans M147–Q360. H150 is subject to Phosphohistidine; by autocatalysis.

As to quaternary structure, homooligomerizes. Interacts with KaiC. Participates in the KaiBC complex, whose core is composed of a KaiC homohexamer and 6 KaiB.

The catalysed reaction is ATP + protein L-histidine = ADP + protein N-phospho-L-histidine.. Functionally, member of the two-component regulatory system SasA/RpaA involved in genome-wide circadian gene expression. One of several clock output pathways. Participates in the Kai clock protein complex, the main circadian regulator in cyanobacteria, via its interaction with KaiC. KaiC enhances the autophosphorylation activity of SasA, which then transfers its phosphate group to RpaA to activate it. In addition to its output function, recruits fold-shifted KaiB (KaiB(fs)) to KaiC to cooperatively form the KaiB(6):KaiC(6) complex (independent of SasA kinase activity). Required for robustness of the circadian rhythm of gene expression and is involved in clock output, also required for adaptation to light/dark cycles. The polypeptide is Adaptive-response sensory-kinase SasA (Prochlorococcus marinus subsp. pastoris (strain CCMP1986 / NIES-2087 / MED4)).